The sequence spans 510 residues: Amidophosphoribosyltransferase (510 aa).

Residue Cys-2 is the Nucleophile of the active site. Residues 2-239 (CGILGIVLAN…PGEAVIIPKN (238 aa)) enclose the Glutamine amidotransferase type-2 domain. The Mg(2+) site is built by Asp-373 and Asp-374.

It in the C-terminal section; belongs to the purine/pyrimidine phosphoribosyltransferase family. Mg(2+) is required as a cofactor.

It carries out the reaction 5-phospho-beta-D-ribosylamine + L-glutamate + diphosphate = 5-phospho-alpha-D-ribose 1-diphosphate + L-glutamine + H2O. Its pathway is purine metabolism; IMP biosynthesis via de novo pathway; N(1)-(5-phospho-D-ribosyl)glycinamide from 5-phospho-alpha-D-ribose 1-diphosphate: step 1/2. The chain is Amidophosphoribosyltransferase (ADE4) from Saccharomyces cerevisiae (strain ATCC 204508 / S288c) (Baker's yeast).